A 396-amino-acid chain; its full sequence is 1-deoxy-D-xylulose 5-phosphate reductoisomerase (396 aa).

NADPH is bound by residues Thr-15, Gly-16, Ser-17, Ile-18, Gly-41, and Asn-129. Lys-130 contacts 1-deoxy-D-xylulose 5-phosphate. NADPH is bound at residue Glu-131. Residue Asp-155 coordinates Mn(2+). 4 residues coordinate 1-deoxy-D-xylulose 5-phosphate: Ser-156, Glu-157, Ser-182, and His-205. Glu-157 contacts Mn(2+). Gly-211 serves as a coordination point for NADPH. Ser-218, Asn-223, Lys-224, and Glu-227 together coordinate 1-deoxy-D-xylulose 5-phosphate. Glu-227 is a Mn(2+) binding site.

Belongs to the DXR family. It depends on Mg(2+) as a cofactor. Mn(2+) serves as cofactor.

It carries out the reaction 2-C-methyl-D-erythritol 4-phosphate + NADP(+) = 1-deoxy-D-xylulose 5-phosphate + NADPH + H(+). The protein operates within isoprenoid biosynthesis; isopentenyl diphosphate biosynthesis via DXP pathway; isopentenyl diphosphate from 1-deoxy-D-xylulose 5-phosphate: step 1/6. Its function is as follows. Catalyzes the NADPH-dependent rearrangement and reduction of 1-deoxy-D-xylulose-5-phosphate (DXP) to 2-C-methyl-D-erythritol 4-phosphate (MEP). In Xanthomonas campestris pv. campestris (strain B100), this protein is 1-deoxy-D-xylulose 5-phosphate reductoisomerase.